A 118-amino-acid chain; its full sequence is UPF0058 protein MJ1132 (118 aa).

It belongs to the UPF0058 family.

The protein is UPF0058 protein MJ1132 of Methanocaldococcus jannaschii (strain ATCC 43067 / DSM 2661 / JAL-1 / JCM 10045 / NBRC 100440) (Methanococcus jannaschii).